A 274-amino-acid polypeptide reads, in one-letter code: Dermonecrotic toxin SdSicTox-betaIIB1aii (274 aa).

H5 is a catalytic residue. E25 and D27 together coordinate Mg(2+). Catalysis depends on H41, which acts as the Nucleophile. Intrachain disulfides connect C45–C51 and C47–C190. D85 is a binding site for Mg(2+).

It belongs to the arthropod phospholipase D family. Class II subfamily. The cofactor is Mg(2+). Expressed by the venom gland.

It is found in the secreted. It catalyses the reaction an N-(acyl)-sphingosylphosphocholine = an N-(acyl)-sphingosyl-1,3-cyclic phosphate + choline. The enzyme catalyses an N-(acyl)-sphingosylphosphoethanolamine = an N-(acyl)-sphingosyl-1,3-cyclic phosphate + ethanolamine. The catalysed reaction is a 1-acyl-sn-glycero-3-phosphocholine = a 1-acyl-sn-glycero-2,3-cyclic phosphate + choline. It carries out the reaction a 1-acyl-sn-glycero-3-phosphoethanolamine = a 1-acyl-sn-glycero-2,3-cyclic phosphate + ethanolamine. Its function is as follows. Dermonecrotic toxins cleave the phosphodiester linkage between the phosphate and headgroup of certain phospholipids (sphingolipid and lysolipid substrates), forming an alcohol (often choline) and a cyclic phosphate. This toxin acts on sphingomyelin (SM). It may also act on ceramide phosphoethanolamine (CPE), lysophosphatidylcholine (LPC) and lysophosphatidylethanolamine (LPE), but not on lysophosphatidylserine (LPS), and lysophosphatidylglycerol (LPG). It acts by transphosphatidylation, releasing exclusively cyclic phosphate products as second products. Induces dermonecrosis, hemolysis, increased vascular permeability, edema, inflammatory response, and platelet aggregation. This Sicarius cf. damarensis (strain GJB-2008) (Six-eyed sand spider) protein is Dermonecrotic toxin SdSicTox-betaIIB1aii.